The following is a 191-amino-acid chain: COP9 signalosome complex subunit 8 (191 aa).

A PCI domain is found at methionine 6–leucine 179.

The protein belongs to the CSN8 family. As to quaternary structure, component of the CSN complex, probably composed of cops1, cops2, cops3, cops4, cops5, cops6, cops7, cops8 and cops9.

Its subcellular location is the cytoplasm. The protein localises to the nucleus. Component of the COP9 signalosome complex (CSN), a complex involved in various cellular and developmental processes. The CSN complex is an essential regulator of the ubiquitin (Ubl) conjugation pathway by mediating the deneddylation of the cullin subunits of E3 ligase complexes, leading to modify the Ubl ligase activity. The chain is COP9 signalosome complex subunit 8 (cops8) from Danio rerio (Zebrafish).